Consider the following 327-residue polypeptide: DNA-directed RNA polymerase subunit alpha (327 aa).

The segment at 1–233 is alpha N-terminal domain (alpha-NTD); it reads MQGSVTEFLK…EQLEAFVDLR (233 aa). The tract at residues 247–327 is alpha C-terminal domain (alpha-CTD); that stretch reads FDPVLLRPVD…NWPPLGFIDK (81 aa).

It belongs to the RNA polymerase alpha chain family. In terms of assembly, homodimer. The RNAP catalytic core consists of 2 alpha, 1 beta, 1 beta' and 1 omega subunit. When a sigma factor is associated with the core the holoenzyme is formed, which can initiate transcription.

It carries out the reaction RNA(n) + a ribonucleoside 5'-triphosphate = RNA(n+1) + diphosphate. Functionally, DNA-dependent RNA polymerase catalyzes the transcription of DNA into RNA using the four ribonucleoside triphosphates as substrates. This Baumannia cicadellinicola subsp. Homalodisca coagulata protein is DNA-directed RNA polymerase subunit alpha.